A 353-amino-acid chain; its full sequence is COMPASS component SPP1 (353 aa).

The segment at 22–72 (DVYCICKRPDYGELMVGCDGCDDWFHFTCLHIPEQFKDLVFSFYCPYCQAG) adopts a PHD-type zinc-finger fold. Zn(2+)-binding residues include cysteine 25, cysteine 27, cysteine 39, cysteine 42, histidine 47, cysteine 50, cysteine 66, and cysteine 69. Residues 83–124 (NGEGSLPKTLWKRKCRISDCYKPCLQDSKYCSEEHGREFVND) are non coventional C3H-type zinc finger. Serine 87 bears the Phosphoserine mark. The Zn(2+) site is built by cysteine 97, cysteine 102, cysteine 113, and histidine 117. Positions 235-244 (VECGKEDSKG) are enriched in basic and acidic residues. The tract at residues 235–255 (VECGKEDSKGTKRKKKKNSSR) is disordered. Residues 245–255 (TKRKKKKNSSR) show a composition bias toward basic residues.

Component of the Set1C/COMPASS complex which consists of SET1(2), BRE2(2), SPP1(2), SDC1(1), SHG1(1), SWD1(1), SWD2(1), and SWD3(1).

It localises to the nucleus. Its function is as follows. Component of the Set1C/COMPASS complex that specifically mono-, di- and trimethylates histone H3 to form H3K4me1/2/3, which subsequently plays a role in telomere length maintenance and transcription elongation regulation. COMPASS recognizes ubiquitinated H2B on one face of the nucleosome which stimulates the methylation of H3 on the opposing face. SPP1/CPS40 can recognize methylated histone lysine residue H3K4me3 or unmethylated H3K4. Stimulates the RNA binding activity of SET1. The chain is COMPASS component SPP1 from Saccharomyces cerevisiae (strain ATCC 204508 / S288c) (Baker's yeast).